Consider the following 142-residue polypeptide: Hemoglobin subunit alpha-4 (142 aa).

Residue S1 is modified to N-acetylserine. The Globin domain occupies 1-142; the sequence is SLSAKDKANV…LALALAEKYR (142 aa). O2 is bound at residue H59. H88 lines the heme b pocket.

The protein belongs to the globin family. In terms of assembly, heterotetramer of two alpha chains and two beta chains. Red blood cells.

In terms of biological role, involved in oxygen transport from gills to the various peripheral tissues. This chain is Hemoglobin subunit alpha-4 (hba4), found in Oncorhynchus mykiss (Rainbow trout).